The following is a 431-amino-acid chain: Adenylosuccinate synthetase (431 aa).

Residues 13–19 (GDEGKGK) and 41–43 (GHT) contribute to the GTP site. The Proton acceptor role is filled by aspartate 14. Mg(2+)-binding residues include aspartate 14 and glycine 41. Residues 14 to 17 (DEGK), 39 to 42 (NAGH), threonine 130, arginine 144, glutamine 225, threonine 240, and arginine 304 contribute to the IMP site. Histidine 42 (proton donor) is an active-site residue. A substrate-binding site is contributed by 300–306 (ATTHRPR). GTP contacts are provided by residues arginine 306, 332–334 (KLD), and 414–416 (STG).

This sequence belongs to the adenylosuccinate synthetase family. As to quaternary structure, homodimer. Mg(2+) serves as cofactor.

The protein resides in the cytoplasm. The catalysed reaction is IMP + L-aspartate + GTP = N(6)-(1,2-dicarboxyethyl)-AMP + GDP + phosphate + 2 H(+). It functions in the pathway purine metabolism; AMP biosynthesis via de novo pathway; AMP from IMP: step 1/2. Its function is as follows. Plays an important role in the de novo pathway of purine nucleotide biosynthesis. Catalyzes the first committed step in the biosynthesis of AMP from IMP. The polypeptide is Adenylosuccinate synthetase (Nitrosococcus oceani (strain ATCC 19707 / BCRC 17464 / JCM 30415 / NCIMB 11848 / C-107)).